Here is a 418-residue protein sequence, read N- to C-terminus: CinA-like protein (418 aa).

It belongs to the CinA family.

In Cytophaga hutchinsonii (strain ATCC 33406 / DSM 1761 / CIP 103989 / NBRC 15051 / NCIMB 9469 / D465), this protein is CinA-like protein.